The following is a 563-amino-acid chain: DNA mismatch repair protein MutL (563 aa).

Belongs to the DNA mismatch repair MutL/HexB family.

In terms of biological role, this protein is involved in the repair of mismatches in DNA. It is required for dam-dependent methyl-directed DNA mismatch repair. May act as a 'molecular matchmaker', a protein that promotes the formation of a stable complex between two or more DNA-binding proteins in an ATP-dependent manner without itself being part of a final effector complex. The chain is DNA mismatch repair protein MutL from Trichormus variabilis (strain ATCC 29413 / PCC 7937) (Anabaena variabilis).